We begin with the raw amino-acid sequence, 298 residues long: Acetylglutamate kinase (298 aa).

Residues 67-68 (GG), Arg-89, and Asn-193 contribute to the substrate site.

It belongs to the acetylglutamate kinase family. ArgB subfamily.

The protein localises to the cytoplasm. It carries out the reaction N-acetyl-L-glutamate + ATP = N-acetyl-L-glutamyl 5-phosphate + ADP. Its pathway is amino-acid biosynthesis; L-arginine biosynthesis; N(2)-acetyl-L-ornithine from L-glutamate: step 2/4. In terms of biological role, catalyzes the ATP-dependent phosphorylation of N-acetyl-L-glutamate. This Desulfitobacterium hafniense (strain DSM 10664 / DCB-2) protein is Acetylglutamate kinase.